A 911-amino-acid chain; its full sequence is Alpha-actinin-4 (911 aa).

The segment at 1-269 is actin-binding; the sequence is MVDYHAANQS…YVSSFYHAFS (269 aa). The segment at 12-26 is interaction with VCL; it reads QYGPSSAGNGAGGGG. Tyr-31 is modified (phosphotyrosine). The segment at 40–61 is interaction with VCL; it reads RDLLLDPAWEKQQRKTFTAWCN. Calponin-homology (CH) domains are found at residues 50 to 154 and 163 to 269; these read KQQR…LRFA and TSAK…HAFS. An LXXLL motif motif is present at residues 84–88; that stretch reads LMLLL. The tract at residues 108 to 126 is interaction with VCL; that stretch reads KINNVNKALDFIASKGVKL. Lys-114 carries the post-translational modification N6-acetyllysine. The interval 177-192 is polyphosphoinositide (PIP2)-binding; that stretch reads TAPYKNVNVQNFHISW. Residue Lys-214 is modified to N6-acetyllysine. Phosphothreonine is present on Thr-249. 4 Spectrin repeats span residues 293–403, 413–518, 528–639, and 649–752; these read HLME…WLLN, HLAE…ALEK, QLHL…ALLE, and HLRR…EVEN. N6-acetyllysine occurs at positions 592 and 625. Position 696 is a phosphoserine (Ser-696). The interval 736 to 911 is mediates interaction with MICALL2; sequence WEQLLTTIAR…STALYGESDL (176 aa). EF-hand domains are found at residues 765–800 and 806–841; these read EQMQEFRASFNHFDKDHGGALGPEEFKACLISLGYD and QGEAEFNRIMSLVDPNHSGLVTFQAFIDFMSRETTD. Residue Asp-778 coordinates Ca(2+). The residue at position 779 (Lys-779) is an N6-acetyllysine. 2 residues coordinate Ca(2+): Asp-780 and Glu-789. At Lys-859 the chain carries N6-acetyllysine. Position 909 is a phosphoserine (Ser-909).

It belongs to the alpha-actinin family. Homodimer; antiparallel. Binds TRIM3 at the N-terminus. Interacts with MICALL2 (preferentially in opened conformation); stimulated by RAB13 activation. Identified in a complex with CASK, IQGAP1, MAGI2, NPHS1, SPTAN1 and SPTBN1. Identified in a IGF2BP1-dependent mRNP granule complex containing untranslated mRNAs. Component of the CART complex, at least composed of ACTN4, HGS/HRS, MYO5B and TRIM3. Interacts with MAGI1. Interacts with PDLIM2. Interacts with PPARG and RARA. Binds to VCL; this interaction triggers VCL conformational changes. Interacts with SEPTIN14. Interacts with IGSF8. Widely expressed.

It is found in the nucleus. It localises to the cytoplasm. The protein localises to the cell junction. The protein resides in the cytoskeleton. Its subcellular location is the stress fiber. It is found in the perinuclear region. In terms of biological role, F-actin cross-linking protein which is thought to anchor actin to a variety of intracellular structures. This is a bundling protein. Probably involved in vesicular trafficking via its association with the CART complex. The CART complex is necessary for efficient transferrin receptor recycling but not for EGFR degradation. Involved in tight junction assembly in epithelial cells probably through interaction with MICALL2. Links MICALL2 to the actin cytoskeleton and recruits it to the tight junctions. May also function as a transcriptional coactivator, stimulating transcription mediated by the nuclear hormone receptors PPARG and RARA. Association with IGSF8 regulates the immune synapse formation and is required for efficient T-cell activation. The polypeptide is Alpha-actinin-4 (Homo sapiens (Human)).